Here is a 653-residue protein sequence, read N- to C-terminus: Probable sulfate transporter 3.4 (653 aa).

Residues 1–92 (MGHGTNRVED…QYDLKLLRSD (92 aa)) lie on the Cytoplasmic side of the membrane. A helical transmembrane segment spans residues 93 to 113 (VISGLTIASLAIPQGISYAKL). Over 114–115 (AN) the chain is Extracellular. The helical transmembrane segment at 116 to 136 (LPPIVGLYSSFVPPLIYAVLG) threads the bilayer. Residues 137–140 (SSRH) lie on the Cytoplasmic side of the membrane. The helical transmembrane segment at 141-161 (LAVGPVSIASLVMGSMLSESV) threads the bilayer. Residues 162-167 (SPTQDS) lie on the Extracellular side of the membrane. Residues 168–188 (ILYLKLAFTSTFFAGVFQASL) traverse the membrane as a helical segment. Residues 189–194 (GLLRLG) lie on the Cytoplasmic side of the membrane. The helical transmembrane segment at 195-215 (FMIDFLSKATLIGFTAGAAVI) threads the bilayer. The Extracellular portion of the chain corresponds to 216–247 (VSLQQLKGLLGIVHFTGKMQIVPVMSSVFNHR). A helical transmembrane segment spans residues 248–268 (SEWSWETIVMGIGFLSILLTT). At 269-279 (RHISMRKPKLF) the chain is on the cytoplasmic side. The chain crosses the membrane as a helical span at residues 280-300 (WISAASPLASVIISTLLVYLI). Residues 301-331 (RSKTHAISFIGHLPKGLNPPSLNMLYFSGAH) are Extracellular-facing. The helical transmembrane segment at 332–352 (LALAIKTGIITGILSLTEGIA) threads the bilayer. Residues 353-370 (VGRTFASLKNYQVNGNKE) lie on the Cytoplasmic side of the membrane. The chain crosses the membrane as a helical span at residues 371-391 (MMAIGFMNMAGSCTSCYVTTG). Over 392-407 (SFSRSAVNYNAGAKTA) the chain is Extracellular. A helical transmembrane segment spans residues 408-428 (VSNIVMASAVLVTLLFLMPLF). Topologically, residues 429 to 433 (YYTPN) are cytoplasmic. The chain crosses the membrane as a helical span at residues 434–454 (VILAAIILTAVIGLIDYQAAY). The Extracellular portion of the chain corresponds to 455–471 (KLWKVDKFDFFTCLCSF). Residues 472-492 (FGVLFVSVPLGLAIAVAVSVI) form a helical membrane-spanning segment. At 493-653 (KILLHVTRPN…SSTWKANGQP (161 aa)) the chain is on the cytoplasmic side. In terms of domain architecture, STAS spans 520 to 643 (RYREASRIPG…LTVGEAVADL (124 aa)).

This sequence belongs to the SLC26A/SulP transporter (TC 2.A.53) family.

Its subcellular location is the membrane. Functionally, h(+)/sulfate cotransporter that may play a role in the regulation of sulfate assimilation. This is Probable sulfate transporter 3.4 (SULTR3;4) from Arabidopsis thaliana (Mouse-ear cress).